Consider the following 179-residue polypeptide: Large ribosomal subunit protein uL6 (179 aa).

It belongs to the universal ribosomal protein uL6 family. Part of the 50S ribosomal subunit.

Its function is as follows. This protein binds to the 23S rRNA, and is important in its secondary structure. It is located near the subunit interface in the base of the L7/L12 stalk, and near the tRNA binding site of the peptidyltransferase center. In Kineococcus radiotolerans (strain ATCC BAA-149 / DSM 14245 / SRS30216), this protein is Large ribosomal subunit protein uL6.